The chain runs to 490 residues: Betaine aldehyde dehydrogenase (490 aa).

Residues Ile27 and Asp93 each contribute to the K(+) site. An NAD(+)-binding site is contributed by 150–152 (GAW). The Charge relay system role is filled by Lys162. 176-179 (KPSE) contributes to the NAD(+) binding site. A K(+)-binding site is contributed by Val180. Position 230–233 (230–233 (GTTT)) interacts with NAD(+). A K(+)-binding site is contributed by Leu246. The active-site Proton acceptor is the Glu252. The NAD(+) site is built by Gly254, Cys286, and Glu387. Residue Cys286 is the Nucleophile of the active site. Cys286 is subject to Cysteine sulfenic acid (-SOH). 2 residues coordinate K(+): Lys457 and Gly460. Glu464 functions as the Charge relay system in the catalytic mechanism.

Belongs to the aldehyde dehydrogenase family. Dimer of dimers. Requires K(+) as cofactor.

It carries out the reaction betaine aldehyde + NAD(+) + H2O = glycine betaine + NADH + 2 H(+). The protein operates within amine and polyamine biosynthesis; betaine biosynthesis via choline pathway; betaine from betaine aldehyde: step 1/1. Functionally, involved in the biosynthesis of the osmoprotectant glycine betaine. Catalyzes the irreversible oxidation of betaine aldehyde to the corresponding acid. This Pseudomonas putida (strain ATCC 700007 / DSM 6899 / JCM 31910 / BCRC 17059 / LMG 24140 / F1) protein is Betaine aldehyde dehydrogenase.